We begin with the raw amino-acid sequence, 424 residues long: Tol-Pal system protein TolB (424 aa).

The first 20 residues, 1–20, serve as a signal peptide directing secretion; sequence MKQFIVFILSLYTTLSWAVL.

This sequence belongs to the TolB family. The Tol-Pal system is composed of five core proteins: the inner membrane proteins TolA, TolQ and TolR, the periplasmic protein TolB and the outer membrane protein Pal. They form a network linking the inner and outer membranes and the peptidoglycan layer.

It localises to the periplasm. Functionally, part of the Tol-Pal system, which plays a role in outer membrane invagination during cell division and is important for maintaining outer membrane integrity. This Vesicomyosocius okutanii subsp. Calyptogena okutanii (strain HA) protein is Tol-Pal system protein TolB.